The primary structure comprises 250 residues: Glycerol-1-phosphate phosphohydrolase 2 (250 aa).

Residue D18 is the Nucleophile of the active site. 2 residues coordinate Mg(2+): D18 and D20. The Proton donor role is filled by D20. K64 participates in a covalent cross-link: Glycyl lysine isopeptide (Lys-Gly) (interchain with G-Cter in ubiquitin). S90 carries the post-translational modification Phosphoserine. Residue K144 forms a Glycyl lysine isopeptide (Lys-Gly) (interchain with G-Cter in ubiquitin) linkage. Residue D179 coordinates Mg(2+).

The protein belongs to the HAD-like hydrolase superfamily. DOG/GPP family. As to quaternary structure, monomer. It depends on Mg(2+) as a cofactor.

It localises to the cytoplasm. The protein resides in the nucleus. It catalyses the reaction sn-glycerol 1-phosphate + H2O = glycerol + phosphate. The catalysed reaction is sn-glycerol 3-phosphate + H2O = glycerol + phosphate. Glycerol-1-phosphate phosphohydrolase involved in glycerol biosynthesis. Plays a role in osmoadaptation. The protein is Glycerol-1-phosphate phosphohydrolase 2 of Saccharomyces cerevisiae (strain ATCC 204508 / S288c) (Baker's yeast).